Consider the following 471-residue polypeptide: UDP-N-acetylmuramate--L-alanine ligase (471 aa).

114 to 120 (GTHGKTT) contributes to the ATP binding site.

This sequence belongs to the MurCDEF family.

The protein resides in the cytoplasm. The catalysed reaction is UDP-N-acetyl-alpha-D-muramate + L-alanine + ATP = UDP-N-acetyl-alpha-D-muramoyl-L-alanine + ADP + phosphate + H(+). The protein operates within cell wall biogenesis; peptidoglycan biosynthesis. In terms of biological role, cell wall formation. The polypeptide is UDP-N-acetylmuramate--L-alanine ligase (Chlorobaculum parvum (strain DSM 263 / NCIMB 8327) (Chlorobium vibrioforme subsp. thiosulfatophilum)).